The chain runs to 345 residues: Methionine import ATP-binding protein MetN 2 (345 aa).

The ABC transporter domain maps to 4 to 243; the sequence is IELRHVKKEF…PQTEIAKRFI (240 aa). 40–47 serves as a coordination point for ATP; it reads GYSGAGKS.

Belongs to the ABC transporter superfamily. Methionine importer (TC 3.A.1.24) family. The complex is composed of two ATP-binding proteins (MetN), two transmembrane proteins (MetI) and a solute-binding protein (MetQ).

The protein resides in the cell membrane. The catalysed reaction is L-methionine(out) + ATP + H2O = L-methionine(in) + ADP + phosphate + H(+). The enzyme catalyses D-methionine(out) + ATP + H2O = D-methionine(in) + ADP + phosphate + H(+). Functionally, part of the ABC transporter complex MetNIQ involved in methionine import. Responsible for energy coupling to the transport system. The chain is Methionine import ATP-binding protein MetN 2 from Enterococcus faecalis (strain ATCC 700802 / V583).